The sequence spans 269 residues: Putative pyruvate, phosphate dikinase regulatory protein (269 aa).

An ADP-binding site is contributed by 151-158; it reads GVSRSSKT.

It belongs to the pyruvate, phosphate/water dikinase regulatory protein family. PDRP subfamily.

The enzyme catalyses N(tele)-phospho-L-histidyl/L-threonyl-[pyruvate, phosphate dikinase] + ADP = N(tele)-phospho-L-histidyl/O-phospho-L-threonyl-[pyruvate, phosphate dikinase] + AMP + H(+). It carries out the reaction N(tele)-phospho-L-histidyl/O-phospho-L-threonyl-[pyruvate, phosphate dikinase] + phosphate + H(+) = N(tele)-phospho-L-histidyl/L-threonyl-[pyruvate, phosphate dikinase] + diphosphate. Bifunctional serine/threonine kinase and phosphorylase involved in the regulation of the pyruvate, phosphate dikinase (PPDK) by catalyzing its phosphorylation/dephosphorylation. This Geobacter sulfurreducens (strain ATCC 51573 / DSM 12127 / PCA) protein is Putative pyruvate, phosphate dikinase regulatory protein.